We begin with the raw amino-acid sequence, 241 residues long: MRVVVSIGGSVLAPGLDADQVDAHADAINELTDAGCEVGAVVGGGGVARDYIGTARELGANEIELDDIGVDVTRLNARLLIAALGGDAAPSPAEDYEDAGEAMRRGDIAVMGGVVAGQTTDAVSAALAEYTDADLLLYATSVPGVFSADPNEDADAEHFTRMTAGELVDIIADIEMNAGSSAPVDLLAAKLIERSGVRTIVLDGTDPRRIVDAVRFGEHDGTDVIPDGTDNQMTYWADNQE.

9–10 (GS) contributes to the ATP binding site. Glycine 44 is a UMP binding site. 2 residues coordinate ATP: glycine 45 and arginine 49. Residues aspartate 66 and 114-120 (VVAGQTT) contribute to the UMP site. ATP is bound by residues threonine 140, phenylalanine 146, and aspartate 149.

This sequence belongs to the UMP kinase family. Homohexamer.

Its subcellular location is the cytoplasm. It carries out the reaction UMP + ATP = UDP + ADP. It functions in the pathway pyrimidine metabolism; CTP biosynthesis via de novo pathway; UDP from UMP (UMPK route): step 1/1. Its activity is regulated as follows. Inhibited by UTP. Functionally, catalyzes the reversible phosphorylation of UMP to UDP. The sequence is that of Uridylate kinase from Halobacterium salinarum (strain ATCC 29341 / DSM 671 / R1).